Here is a 997-residue protein sequence, read N- to C-terminus: MDSTDDDFGDLYVDDAKFQATDAFESECATNSGEDKGFEETVKSDSEGEVKKFDVVAKDSSPCDDDDCAMNLTEADEESEFSDSDDDLNIVLKDDDSKALPASCVFNTNFGGYEASKASSFQRRWTRNASANNACIDPSLGMSQYRYSFPNPWSRTPFDVNLDVLEKKPWRDPGTDTSDFFNFGLNEQSWKDYCKPLGRAIEVRGGTLERIPSADLRRPRDPDPGVVIQIPVTNDVEELPVRTPEKARCITSNEASRSDVSHSYGSKDLNSVYGSPKDEAFVGCQEENAGSFSGEKSLPTENCCSREATPSDKEMLEKEKEESVCNSDETDPSSVERESSLGDRIRLSPTSSSSVGINEESDDYETESLKDSATDDQREVSTPPQEARLAEHEAISIKRGEDSGTMHSRHRRSHEDSSKRHCGRAGYARYVKDASPTPDPGRGKKVGSLQGLYRDSNKNWQNGPPITLERDETEGKGVHYYREKSHGRLNSSVDHDRHREHRFGWRNNKESSLGRGFDHSNSYKCGTHLKEYTSRSSFDLNQRNSRSSFKEEDDRYGWHHRERKYVHERSPIRAYENYKERNGCDWLREPYYEDCIPITDMDYRYRSENSSAHAIHNLKHSPENDLYCRRRGGYDYNLHRDRYEDGVHRVESRIPFELAYREMRSFAEVEMREYQGYKRHEEFSEIEKRHHYIHDWHLDRFVSEEDGYKYRIQDGWSSPSLSLRDSWYTKEAKGDFRRDDTRDFRTPEAYDSQNNHFHKAAPRDGWTQNLGRSHNVSVKDRLQYDADWVGPDRGRYNMADDMQCSMREVSNSEHPSYTDEIFVRDIRVPTHNRMATKQRFGYLQSHIHENDERHHRSKKLRGDGHAFIKRQDHVDLAGRQGKVSNQSKKRFSNGGDTIEQQDVQKPRKLMGKSEEKAMQNRDINDKEEGEIIEEVKGVEIDNERIQESLKKMEKRRERFKGTKLAVEATFKSQTELRAKADVTNQQRPVRKRRWCAS.

Disordered regions lie at residues 250 to 272, 289 to 475, 534 to 553, and 880 to 900; these read ITSN…LNSV, AGSF…ETEG, SRSS…KEED, and QGKV…TIEQ. The segment covering 261 to 272 has biased composition (polar residues); that stretch reads SHSYGSKDLNSV. Basic and acidic residues-rich tracts occupy residues 309–323, 334–346, 367–379, and 388–404; these read TPSD…KEES, SVER…DRIR, ESLK…DQRE, and RLAE…EDSG. Positions 397-404 match the Nuclear localization signal motif; it reads IKRGEDSG. The segment covering 534 to 547 has biased composition (polar residues); it reads SRSSFDLNQRNSRS. A coiled-coil region spans residues 930-963; the sequence is EIIEEVKGVEIDNERIQESLKKMEKRRERFKGTK.

It belongs to the FIP1 family. As to quaternary structure, component of the cleavage and polyadenylation specificity factor (CPSF) complex. Forms a complex with cleavage and polyadenylation specificity factor (CPSF) subunits CLPS5, FIPS5, PAPS4, PCFS1, CSTF64 and CPSF30.

The protein resides in the nucleus. In terms of biological role, component of the cleavage and polyadenylation specificity factor (CPSF) complex that plays a key role in pre-mRNA 3'-end formation, recognizing the AAUAAA signal sequence and interacting with poly(A) polymerase and other factors to bring about cleavage and poly(A) addition. FIP1L1 contributes to poly(A) site recognition and stimulates poly(A) addition. Binds to U-rich RNA sequence elements surrounding the poly(A) site. May act to tether poly(A) polymerase to the CPSF complex. The chain is FIP1[III]-like protein from Arabidopsis thaliana (Mouse-ear cress).